The following is a 2226-amino-acid chain: Histone-lysine N-methyltransferase ash1 (2226 aa).

Residues Met-1 to Lys-145 form a disordered region. The segment covering Ile-32–Arg-52 has biased composition (polar residues). Residues Ala-99–Leu-111 are compositionally biased toward basic residues. Phosphoserine is present on residues Ser-135, Ser-136, and Ser-138. Residues Thr-200 and Thr-201 each carry the phosphothreonine modification. Over residues Pro-260 to Lys-269 the composition is skewed to basic residues. Disordered stretches follow at residues Pro-260–Ser-324, Arg-343–Lys-367, Ala-673–Leu-695, Ser-711–Pro-749, and Lys-811–Pro-832. Positions Arg-261 to Thr-273 form a DNA-binding region, a.T hook 1. Residues Ser-294 to Pro-306 show a composition bias toward low complexity. The segment covering Lys-307–Ser-324 has biased composition (polar residues). The span at Ser-711–Asn-727 shows a compositional bias: low complexity. Phosphoserine occurs at positions 740, 831, and 977. Residues Ser-820 to Ser-831 show a composition bias toward low complexity. 2 disordered regions span residues Gln-980 to Arg-1026 and Ser-1049 to Leu-1230. Acidic residues predominate over residues His-989–Pro-999. 2 consecutive DNA-binding regions (a.T hook) follow at residues Gly-1065 to Gln-1077 and Ala-1095 to Leu-1107. Residues Glu-1108–Gln-1117 are compositionally biased toward pro residues. The segment covering Ala-1186 to Pro-1200 has biased composition (basic and acidic residues). Residues Glu-1205–Glu-1219 show a composition bias toward polar residues. One can recognise an AWS domain in the interval Phe-1339–Ala-1387. The 117-residue stretch at Pro-1390 to Asn-1506 folds into the SET domain. In terms of domain architecture, Post-SET spans Glu-1514–Gly-1530. Disordered stretches follow at residues Val-1536–Ile-1575 and Arg-1616–Ser-1648. A compositionally biased stretch (basic residues) spans Gly-1556–Gln-1568. Low complexity-rich tracts occupy residues Asp-1619–Ala-1628 and Arg-1639–Ser-1648. The Bromo domain occupies Lys-1681–Ser-1789. Positions Pro-1808–Leu-1839 are disordered. A PHD-type zinc finger spans residues Val-1857–Arg-1903. One can recognise a BAH domain in the interval Lys-1952–Lys-2072. Residues Ser-2205–Thr-2226 are disordered. The span at Thr-2214 to Thr-2226 shows a compositional bias: low complexity.

It belongs to the class V-like SAM-binding methyltransferase superfamily. Histone-lysine methyltransferase family. SET2 subfamily. In terms of assembly, component of a large multiprotein complex distinct from complexes containing ash2 or brm. Interacts (via SET domain) with trx (via SET domain). Interacts with nej/cbp. As to expression, expressed throughout development but is present at higher levels during the embryonic and pupal stages than during the larval stages. During the larval stages it accumulates primarily in imaginal disks.

The protein localises to the nucleus. It is found in the chromosome. It carries out the reaction L-lysyl(4)-[histone H3] + 3 S-adenosyl-L-methionine = N(6),N(6),N(6)-trimethyl-L-lysyl(4)-[histone H3] + 3 S-adenosyl-L-homocysteine + 3 H(+). Trithorax group (TrxG) protein that has histone methyltransferase activity. Specifically trimethylates 'Lys-4' of histone H3 (H3K4me3), a specific tag for epigenetic transcriptional activation. TrxG proteins are generally required to maintain the transcriptionally active state of homeotic genes throughout development. Does not act as a coactivator required for transcriptional activation, but specifically prevents inappropriate Polycomb Group (PcG) silencing of homeotic genes in cells in which they must stay transcriptionally active. In Drosophila melanogaster (Fruit fly), this protein is Histone-lysine N-methyltransferase ash1 (ash1).